A 53-amino-acid chain; its full sequence is uncharacterized protein (53 aa).

Positions S14 to S33 are enriched in low complexity. The tract at residues S14–F53 is disordered.

This is an uncharacterized protein from Dictyostelium discoideum (Social amoeba).